A 252-amino-acid polypeptide reads, in one-letter code: Trans-aconitate 2-methyltransferase (252 aa).

This sequence belongs to the methyltransferase superfamily. Tam family.

The protein localises to the cytoplasm. It carries out the reaction trans-aconitate + S-adenosyl-L-methionine = (E)-3-(methoxycarbonyl)pent-2-enedioate + S-adenosyl-L-homocysteine. Functionally, catalyzes the S-adenosylmethionine monomethyl esterification of trans-aconitate. The polypeptide is Trans-aconitate 2-methyltransferase (Escherichia coli (strain ATCC 8739 / DSM 1576 / NBRC 3972 / NCIMB 8545 / WDCM 00012 / Crooks)).